Here is a 138-residue protein sequence, read N- to C-terminus: Protein FAM216B (138 aa).

The protein belongs to the FAM216 family.

The chain is Protein FAM216B (Fam216b) from Mus musculus (Mouse).